Here is a 409-residue protein sequence, read N- to C-terminus: Sex-determination protein fem-3 (409 aa).

In terms of assembly, component of a complex containing fem-1, fem-2 and fem-3. Interacts with fem-1 and fem-2 (via N-terminus). Part of a E3 ubiquitin-protein ligase complex, at least composed of cul-2, elc-1, tra-1, fem-1, fem-2 and fem-3; mediates the ubiquitination and subsequent proteasomal degradation of tra-1. Interacts with sel-10. Interacts with tra-2.

Functionally, required for male development. In XO (male) animals, fem-3 directs male differentiation in all tissues. In XX (hermaphrodite animals), it specifies the first 80 or so germ cells to be sperm. Negatively regulates male development when bound to tra-2. This is Sex-determination protein fem-3 from Caenorhabditis briggsae.